Reading from the N-terminus, the 100-residue chain is MNLSPREKDKLLVSMAAMVARRRLERGVKLNHPEAIALISDFIVEGARDGRSVAELMQAGAEVLTRAQCMDGIAEMIHDIQVEATFPDGTKLVTVHQPIR.

It belongs to the urease gamma subunit family. As to quaternary structure, heterotrimer of UreA (gamma), UreB (beta) and UreC (alpha) subunits. Three heterotrimers associate to form the active enzyme.

It localises to the cytoplasm. It carries out the reaction urea + 2 H2O + H(+) = hydrogencarbonate + 2 NH4(+). It participates in nitrogen metabolism; urea degradation; CO(2) and NH(3) from urea (urease route): step 1/1. This chain is Urease subunit gamma, found in Rhodopseudomonas palustris (strain BisA53).